Consider the following 291-residue polypeptide: Pyridoxal 5'-phosphate synthase subunit PdxS (291 aa).

Residue Asp-23 participates in D-ribose 5-phosphate binding. Lys-80 serves as the catalytic Schiff-base intermediate with D-ribose 5-phosphate. D-ribose 5-phosphate is bound at residue Gly-152. Residue Arg-164 participates in D-glyceraldehyde 3-phosphate binding. D-ribose 5-phosphate is bound by residues Gly-213 and 234-235 (GS).

This sequence belongs to the PdxS/SNZ family. In the presence of PdxT, forms a dodecamer of heterodimers.

It catalyses the reaction aldehydo-D-ribose 5-phosphate + D-glyceraldehyde 3-phosphate + L-glutamine = pyridoxal 5'-phosphate + L-glutamate + phosphate + 3 H2O + H(+). It functions in the pathway cofactor biosynthesis; pyridoxal 5'-phosphate biosynthesis. Its function is as follows. Catalyzes the formation of pyridoxal 5'-phosphate from ribose 5-phosphate (RBP), glyceraldehyde 3-phosphate (G3P) and ammonia. The ammonia is provided by the PdxT subunit. Can also use ribulose 5-phosphate and dihydroxyacetone phosphate as substrates, resulting from enzyme-catalyzed isomerization of RBP and G3P, respectively. This Haemophilus influenzae (strain ATCC 51907 / DSM 11121 / KW20 / Rd) protein is Pyridoxal 5'-phosphate synthase subunit PdxS.